We begin with the raw amino-acid sequence, 20 residues long: KTGVNKPELLPKEETTVIDV.

The segment at 1-20 (KTGVNKPELLPKEETTVIDV) is disordered. Positions 9–20 (LLPKEETTVIDV) are enriched in basic and acidic residues.

Its subcellular location is the plastid. The protein localises to the chloroplast thylakoid lumen. In Spinacia oleracea (Spinach), this protein is Thylakoid lumenal 14.7 kDa protein.